Here is a 202-residue protein sequence, read N- to C-terminus: Peptide deformylase 2 (202 aa).

Cys-123 and His-165 together coordinate Fe cation. The active site involves Glu-166. His-169 contributes to the Fe cation binding site.

Belongs to the polypeptide deformylase family. Requires Fe(2+) as cofactor.

The catalysed reaction is N-terminal N-formyl-L-methionyl-[peptide] + H2O = N-terminal L-methionyl-[peptide] + formate. In terms of biological role, removes the formyl group from the N-terminal Met of newly synthesized proteins. Requires at least a dipeptide for an efficient rate of reaction. N-terminal L-methionine is a prerequisite for activity but the enzyme has broad specificity at other positions. This Vibrio vulnificus (strain YJ016) protein is Peptide deformylase 2.